The following is a 66-amino-acid chain: UPF0337 protein SAG0606 (66 aa).

Over residues 1 to 10 the composition is skewed to basic and acidic residues; sequence MSQEKLKSKV. Positions 1–23 are disordered; that stretch reads MSQEKLKSKVEQASGSLKEGAGK.

This sequence belongs to the UPF0337 (CsbD) family.

In Streptococcus agalactiae serotype V (strain ATCC BAA-611 / 2603 V/R), this protein is UPF0337 protein SAG0606.